The primary structure comprises 264 residues: MDLLERLGLGGRRVLILHHDDLGLTHAQNGAYQALGLPTGSVMVPGAWASGVKGEDLGVHLVLTSEWPAPRMRPLTEGESLRDEAGYFPESLEALWRKARAEEVERELKAQIQAAAKLFSPTHLDAHQGAVLRPDLAEVYLRLAEAYRLVPLVPESLEGLGVPPPFLPELERLLYETPFPQVRFLDPYGLPPEERLGFYLDLAHLPPGLYYLVHHSALPTPEGRALPDWPTREADYFALSHPEVRRVLAEFHPLTWRAVREALF.

Aspartate 20 serves as the catalytic Proton acceptor. Mg(2+) contacts are provided by aspartate 21, histidine 60, and histidine 127. The active-site Proton donor is histidine 215.

The protein belongs to the YdjC deacetylase family. Homodimer. Requires Mg(2+) as cofactor.

In terms of biological role, probably catalyzes the deacetylation of acetylated carbohydrates an important step in the degradation of oligosaccharides. This is Carbohydrate deacetylase from Thermus thermophilus (strain ATCC 27634 / DSM 579 / HB8).